A 224-amino-acid chain; its full sequence is UPF0758 protein VV1_0825 (224 aa).

Positions 1-20 (MSLKNLPSESMPREKLLQRG) are disordered. The MPN domain occupies 102–224 (ALTSPQHTKL…VVSFAERGWI (123 aa)). Residues histidine 173, histidine 175, and aspartate 186 each coordinate Zn(2+). The JAMM motif motif lies at 173 to 186 (HNHPSGVAEPSQAD).

It belongs to the UPF0758 family.

This is UPF0758 protein VV1_0825 from Vibrio vulnificus (strain CMCP6).